The primary structure comprises 115 residues: Large ribosomal subunit protein bL19 (115 aa).

The protein belongs to the bacterial ribosomal protein bL19 family.

This protein is located at the 30S-50S ribosomal subunit interface and may play a role in the structure and function of the aminoacyl-tRNA binding site. The sequence is that of Large ribosomal subunit protein bL19 from Bacillus licheniformis (strain ATCC 14580 / DSM 13 / JCM 2505 / CCUG 7422 / NBRC 12200 / NCIMB 9375 / NCTC 10341 / NRRL NRS-1264 / Gibson 46).